Consider the following 440-residue polypeptide: Kinetochore protein NUF2 homolog (440 aa).

Coiled coils occupy residues 142–239 (LGLL…LRSQ) and 299–386 (INEQ…RQTN).

This sequence belongs to the NUF2 family. In terms of assembly, component of the NDC80 complex, which consists of NDC80, NUF2, SPC24 and SPC25.

It is found in the chromosome. It localises to the centromere. Its function is as follows. Acts as a component of the essential kinetochore-associated NDC80 complex, which is required for chromosome segregation and spindle checkpoint activity to ensure proper cell division. The polypeptide is Kinetochore protein NUF2 homolog (Arabidopsis thaliana (Mouse-ear cress)).